The primary structure comprises 242 residues: Probable 2-phosphosulfolactate phosphatase (242 aa).

This sequence belongs to the ComB family. Mg(2+) serves as cofactor.

It carries out the reaction (2R)-O-phospho-3-sulfolactate + H2O = (2R)-3-sulfolactate + phosphate. The protein is Probable 2-phosphosulfolactate phosphatase of Synechococcus sp. (strain JA-3-3Ab) (Cyanobacteria bacterium Yellowstone A-Prime).